A 488-amino-acid chain; its full sequence is Photosystem II CP43 reaction center protein (488 aa).

A propeptide spanning residues 1 to 29 (MTKVFALGWLLKINLMKTLYSLRRFYHVE) is cleaved from the precursor. Helical transmembrane passes span 84–108 (LFEV…PHLA), 149–170 (LIGP…RDKN), 193–215 (KALF…RFVS), 270–290 (KPFA…LSYS), and 306–327 (WYNN…ASQA). Glu382 provides a ligand contact to [CaMn4O5] cluster. Residues 462–486 (RARAAAAGFEKGINRENEPVLSMRP) form a helical membrane-spanning segment.

It belongs to the PsbB/PsbC family. PsbC subfamily. PSII is composed of 1 copy each of membrane proteins PsbA, PsbB, PsbC, PsbD, PsbE, PsbF, PsbH, PsbI, PsbJ, PsbK, PsbL, PsbM, PsbT, PsbX, PsbY, PsbZ, Psb30/Ycf12, at least 3 peripheral proteins of the oxygen-evolving complex and a large number of cofactors. It forms dimeric complexes. It depends on Binds multiple chlorophylls and provides some of the ligands for the Ca-4Mn-5O cluster of the oxygen-evolving complex. It may also provide a ligand for a Cl- that is required for oxygen evolution. PSII binds additional chlorophylls, carotenoids and specific lipids. as a cofactor.

Its subcellular location is the plastid. It localises to the chloroplast thylakoid membrane. In terms of biological role, one of the components of the core complex of photosystem II (PSII). It binds chlorophyll and helps catalyze the primary light-induced photochemical processes of PSII. PSII is a light-driven water:plastoquinone oxidoreductase, using light energy to abstract electrons from H(2)O, generating O(2) and a proton gradient subsequently used for ATP formation. This chain is Photosystem II CP43 reaction center protein, found in Pyropia yezoensis (Susabi-nori).